The following is a 363-amino-acid chain: MNTWFLNVVDPLHQWFLGFGDIGVVLWTVLKILMIAIPLIVSVAFYVVWERKLIGWMHVRHGPMYVGMGLFQAFADVFKLLFKEVLYPSKAHKAIFVIAPLLTLAPSFAAWAVVPFDTKLVLSNANVGLLYLLAMTSLGVYGIILAGWASNSKYAFLGAMRSAAQVVSYEIAMGFALVGVMIAAGSLNLSQIVMAQAGSSGFFDWFLIPLFPLFIVYWVSGVAETNRSPFDVVEGESEIVAGHMVEYSGSVFALFFLAEYANMILVSFLISIFFLGGWLSPIQGWVSGQVSPLIDWVWNGGWPWLLLKVLFFASAYIWFRASFPRYRYDQIMRLGWKVFIPLTIVWIAVTALMVFSGVIQKGV.

10 consecutive transmembrane segments (helical) span residues 29–49 (VLKILMIAIPLIVSVAFYVVW), 62–82 (GPMYVGMGLFQAFADVFKLLF), 94–114 (AIFVIAPLLTLAPSFAAWAVV), 127–147 (VGLLYLLAMTSLGVYGIILAG), 166–186 (VVSYEIAMGFALVGVMIAAGS), 202–222 (FFDWFLIPLFPLFIVYWVSGV), 239–257 (IVAGHMVEYSGSVFALFFL), 264–286 (ILVSFLISIFFLGGWLSPIQGWV), 293–313 (LIDWVWNGGWPWLLLKVLFFA), and 339–359 (FIPLTIVWIAVTALMVFSGVI).

This sequence belongs to the complex I subunit 1 family. NDH-1 is composed of 14 different subunits. Subunits NuoA, H, J, K, L, M, N constitute the membrane sector of the complex.

The protein resides in the cell inner membrane. It catalyses the reaction a quinone + NADH + 5 H(+)(in) = a quinol + NAD(+) + 4 H(+)(out). Functionally, NDH-1 shuttles electrons from NADH, via FMN and iron-sulfur (Fe-S) centers, to quinones in the respiratory chain. The immediate electron acceptor for the enzyme in this species is believed to be ubiquinone. Couples the redox reaction to proton translocation (for every two electrons transferred, four hydrogen ions are translocated across the cytoplasmic membrane), and thus conserves the redox energy in a proton gradient. This subunit may bind ubiquinone. The chain is NADH-quinone oxidoreductase subunit H from Xylella fastidiosa (strain Temecula1 / ATCC 700964).